An 802-amino-acid polypeptide reads, in one-letter code: Pyrophosphate-energized membrane proton pump 2 (802 aa).

The next 6 helical transmembrane spans lie at 45 to 65 (VLSIILLFCFGAIFYMGASTS), 66 to 86 (PIIVFVFTVCIISFLLSIYLT), 118 to 138 (YSTISKMAILLAFVILCIYLF), 160 to 180 (VAAFLLGALCSGIAGYVGMWV), 206 to 226 (AGGFSALVVVGMAVIGIAILY), and 246 to 266 (LPLLLVGYGFGASFVALFAQL). Residue K273 participates in substrate binding. The Mg(2+) site is built by D276, D280, and D306. 5 helical membrane passes run 348–368 (FILFPLVVHSFDLIISSIGIL), 386–406 (MAVLQKGYSLTIILAVITFGA), 421–441 (WFNFALCGLVGIITAYIFVWI), 468–488 (IIAGVSLGLESTALPVLTISV), and 511–531 (GGLFGTAVATMGMLSTAAYVL). Residues D541 and N568 each coordinate Mg(2+). Transmembrane regions (helical) follow at residues 577 to 597 (FAIGSAALASFLLFSAYMDEV), 615 to 635 (VFVGGLLGAMLIFLFSAWACA), 686 to 706 (GALAIASPIVVGLVFRILGYY), and 716 to 736 (VVASMLMFATVCGILMALFLN). Mg(2+) is bound by residues D743 and D773. Substrate is bound at residue K776. The helical transmembrane segment at 782–802 (SIHVLIKMLATITLVMAPVFL) threads the bilayer.

Belongs to the H(+)-translocating pyrophosphatase (TC 3.A.10) family. K(+)-insensitive subfamily. Monomer. As to expression, ubiquitous. Mostly expressed in cotyledons, roots and flowers. Especially high levels in trichomes, sepals and stamen filaments.

It localises to the golgi apparatus membrane. The catalysed reaction is diphosphate + H2O + H(+)(in) = 2 phosphate + 2 H(+)(out). Its activity is regulated as follows. Activated by Mg(+) but not by K(+). Inhibited by Ca(2+). Its function is as follows. Pyrophosphatase active in both inorganic pyrophosphate hydrolysis and H(+) translocation. This chain is Pyrophosphate-energized membrane proton pump 2 (AVPL1), found in Arabidopsis thaliana (Mouse-ear cress).